Reading from the N-terminus, the 268-residue chain is MDRYQATFERLAAQKQGAFVPFVTVCDPNPELSLKIMDTLVKAGADALELGIPFSDPLADGPTIQGANIRALDSGATPDICFDLIGQIRAKYPDLPIGLLMYANLVYSRGIENFYQRCAQAGIDSVLIADVPTNESAEFVAAAEKFGVHPIFIAPPTASDETLKQVSQLGGGYTYLLSRAGVTGAETKANMPVGDMLAKLEQFNAPPALLGFGISEPEQVKQAIDAGAAGAISGSAVVKIIESHLNEPDAMLTALANFVSNMKSATQK.

Catalysis depends on proton acceptor residues Glu-49 and Asp-60.

The protein belongs to the TrpA family. In terms of assembly, tetramer of two alpha and two beta chains.

It catalyses the reaction (1S,2R)-1-C-(indol-3-yl)glycerol 3-phosphate + L-serine = D-glyceraldehyde 3-phosphate + L-tryptophan + H2O. It functions in the pathway amino-acid biosynthesis; L-tryptophan biosynthesis; L-tryptophan from chorismate: step 5/5. Its function is as follows. The alpha subunit is responsible for the aldol cleavage of indoleglycerol phosphate to indole and glyceraldehyde 3-phosphate. The polypeptide is Tryptophan synthase alpha chain (Vibrio vulnificus (strain CMCP6)).